Reading from the N-terminus, the 2812-residue chain is Polyunsaturated fatty acid synthase subunit A (2812 aa).

One can recognise a Ketosynthase family 3 (KS3) domain in the interval 12 to 472; it reads DTRIAVIGMS…GANYHAVLEE (461 aa). Active-site for beta-ketoacyl synthase activity residues include C213, H348, and H390. Positions 602 to 913 constitute a Malonyl-CoA:ACP transacylase (MAT) domain; the sequence is LFSGQGAQYT…TVSVNPASGK (312 aa). The stretch at 1000–1048 forms a coiled coil; the sequence is DEEAKREAARLQKQLEDAQRQLDEAKRAADEANQKLAAAKEEAKSAAAS. 3 Carrier domains span residues 1114–1193, 1232–1308, and 1342–1418; these read ALLA…KAEI, ERAE…KAEI, and AKAE…KAEI. O-(pantetheine 4'-phosphoryl)serine is present on residues S1152, S1267, and S1377. Residues 1422–1442 are disordered; sequence SAPAPAAAAPAPAAPAPAAAA. Residues 1423 to 1442 are compositionally biased toward low complexity; the sequence is APAPAAAAPAPAAPAPAAAA. The Carrier 4 domain maps to 1455–1531; that stretch reads AKAETVVMEV…EVVDAMKAEI (77 aa). The residue at position 1490 (S1490) is an O-(pantetheine 4'-phosphoryl)serine. The tract at residues 1535–1555 is disordered; that stretch reads SAPAPAAAAPAPAAPAPAAAA. A compositionally biased stretch (low complexity) spans 1536-1555; that stretch reads APAPAAAAPAPAAPAPAAAA. 4 consecutive Carrier domains span residues 1568-1644, 1681-1757, 1792-1868, and 1903-1979; these read AKAE…KAEI. 4 positions are modified to O-(pantetheine 4'-phosphoryl)serine: S1603, S1716, S1827, and S1938. In terms of domain architecture, Ketoreductase (KR) spans 2257 to 2484; sequence VVSGGARGIT…VKSICFGPWD (228 aa). The interval 2524–2651 is N-terminal hotdog fold; it reads EILVGNWRTP…RAVVVLSSQG (128 aa). A PKS/mFAS DH domain is found at 2524-2812; that stretch reads EILVGNWRTP…SVIATDSLAF (289 aa). The tract at residues 2540–2800 is dehydratase (DH) domain; sequence ETITLHRKIS…NEQGDLFIDV (261 aa). H2559 (proton acceptor; for dehydratase activity) is an active-site residue. The interval 2666 to 2812 is C-terminal hotdog fold; that stretch reads ADPAAQSAVY…SVIATDSLAF (147 aa). The active-site Proton donor; for dehydratase activity is D2730.

As to quaternary structure, component of the polyunsaturated fatty acid synthase complex composed of at least ORF-A, ORF-B and ORF-C. The cofactor is pantetheine 4'-phosphate.

It participates in lipid metabolism; fatty acid biosynthesis. Functionally, poliketide synthase-like protein; part of the polyunsaturated fatty acid synthase composed of the 3 PKS-like subunits A, B and C. While the saturated fatty acids (SFAs) in Thraustochytrium are produced by the conventional fatty acid synthase (FAS) pathway, polyunsaturated fatty acids (PUFAs) including docosahexeanoic acid (DHA) and docosapentaenoic acid (DPA) are synthesized via an anaerobical PKS pathway. PUFA synthase assimilates fatty acyl-CoA, the product of FAS, as the starter unit to synthesize DPA, and this starter unit may be butyryl-CoA, hexanoyl-CoA, or octanoyl-CoA. DPA and DHA biosynthesis seem to differ by the reduction at the N-3 position by PUFA synthase, not the extension of carbon chain. In DHA biosynthesis, PUFA synthase extends the fatty acyl chain from the methyl toward the carboxyl end, and the double bond is formed when the carbon chain is growing, instead of afterward. Therefore, PUFA synthase is unable to transform DPA to DHA, suggesting that DPA is not the precursor of DHA. Moreover, DPA molecule is partly extended by FAS KS domain, so DPA biosynthesis is less dependent on PUFA synthase KS domain than DHA. This is Polyunsaturated fatty acid synthase subunit A from Thraustochytrium sp. (strain ATCC 26185 / S-3).